A 338-amino-acid chain; its full sequence is Solute carrier family 35 member G5 (338 aa).

Residues 1-27 are disordered; it reads MAGSHPYFNLPDSTHPSPPSAPPSLRW. A run of 9 helical transmembrane segments spans residues 37–57, 67–87, 102–122, 160–180, 190–210, 221–241, 250–270, 281–301, and 305–325; these read TNGL…VGPL, LPSL…ALLL, GWAC…YSAV, CGLL…LWTL, TLGY…LLVY, TVAF…LFVL, LLSW…FTCV, LVCA…YYML, and VALS…IITA. The EamA 1 domain maps to 49-174; it reads LPAGFVGPLS…SILGLIIILG (126 aa). Residues 272–325 form the EamA 2 domain; it reads YAVTKAHPALVCAVLHSEVVVALILQYYMLHETVALSDIMGAGVVLGSIAIITA.

The protein belongs to the SLC35G solute transporter family. As to expression, expressed in placenta and testis.

Its subcellular location is the membrane. This Homo sapiens (Human) protein is Solute carrier family 35 member G5 (SLC35G5).